Here is a 1096-residue protein sequence, read N- to C-terminus: Adenylate-forming reductase Nps9 (1096 aa).

The interval 39–352 (DDTLTEISFL…TTEFGAPTQL (314 aa)) is adenylation (A) domain. AMP-binding positions include histidine 236, 339–340 (VQ), threonine 344, and 425–428 (IIGR). Residues 569 to 656 (EWTVSTLEHW…LLADRVAKIA (88 aa)) form the Carrier domain. Serine 605 is subject to O-(pantetheine 4'-phosphoryl)serine. Residues 716 to 952 (LTGSTGGLGS…MPAEKVSAAI (237 aa)) are reductase (R) domain. Residues 720 to 723 (TGGL), 807 to 809 (SAW), tyrosine 880, and lysine 884 contribute to the NADP(+) site.

The protein belongs to the adenylate-forming reductase family.

Its function is as follows. Adenylate-forming reductase, a natural product biosynthesis enzyme that resembles non-ribosomal peptide synthetases, yet serves to modify one substrate, rather than to condense two or more building blocks. The A-domain preferentially accepts L-threonine as substrate. The natural product of the enzyme is not yet known. This Serpula lacrymans var. lacrymans (strain S7.9) (Dry rot fungus) protein is Adenylate-forming reductase Nps9.